We begin with the raw amino-acid sequence, 194 residues long: Protein GrpE (194 aa).

The segment covering 1–14 (MENTQENPTSQNPT) has biased composition (polar residues). The tract at residues 1-50 (MENTQENPTSQNPTPADETARQAAEAAAPQQEAAANAATDSPVNAEQSAL) is disordered. Low complexity predominate over residues 21 to 38 (RQAAEAAAPQQEAAANAA).

It belongs to the GrpE family. As to quaternary structure, homodimer.

The protein resides in the cytoplasm. In terms of biological role, participates actively in the response to hyperosmotic and heat shock by preventing the aggregation of stress-denatured proteins, in association with DnaK and GrpE. It is the nucleotide exchange factor for DnaK and may function as a thermosensor. Unfolded proteins bind initially to DnaJ; upon interaction with the DnaJ-bound protein, DnaK hydrolyzes its bound ATP, resulting in the formation of a stable complex. GrpE releases ADP from DnaK; ATP binding to DnaK triggers the release of the substrate protein, thus completing the reaction cycle. Several rounds of ATP-dependent interactions between DnaJ, DnaK and GrpE are required for fully efficient folding. This is Protein GrpE from Paraburkholderia phytofirmans (strain DSM 17436 / LMG 22146 / PsJN) (Burkholderia phytofirmans).